A 198-amino-acid polypeptide reads, in one-letter code: Cyclotides mra4/mra5 (198 aa).

A signal peptide spans 1–22; that stretch reads MESNKMVVGVLLIAAFALPALA. Positions 23–79 are excised as a propeptide; the sequence is LFERDVITHETIEAVLKKSTPNSNTMLQEDAINALTGKTLISQTILEETLLKNGVVG. Cystine bridges form between C84–C100, C88–C102, and C93–C107. Positions 111-163 are excised as a propeptide; that stretch reads SLALPTLEKDVITPEALEAVLKSNGGAIVNTKTIISNAIFEETLLNNANHVLG. Disulfide bonds link C167–C183, C171–C185, and C176–C190. A propeptide spanning residues 194-198 is cleaved from the precursor; that stretch reads SLALN.

The protein belongs to the cyclotide family. Bracelet subfamily. These are cyclic peptides. In terms of processing, the mature peptides contain 3 disulfide bonds each.

Functionally, probably participates in a plant defense mechanism. In Melicytus ramiflorus (Whitey wood), this protein is Cyclotides mra4/mra5.